We begin with the raw amino-acid sequence, 931 residues long: Netrin receptor UNC5C (931 aa).

A signal peptide spans 1-40 (MRKGLRATAARCGLGLGYLLQMLVLPALALLSASGTGSAA). At 41–380 (QDDDFFHELP…APDSDDVALY (340 aa)) the chain is on the extracellular side. Residues 62–159 (PHFLIEPEEA…AGTTKSRKAY (98 aa)) enclose the Ig-like domain. 9 cysteine pairs are disulfide-bonded: C83–C144, C95–C142, C188–C239, C272–C309, C276–C313, C287–C299, C328–C362, C332–C367, and C340–C352. The Ig-like C2-type domain maps to 161-256 (RIAYLRKTFE…KRKSTTATVI (96 aa)). N-linked (GlcNAc...) asparagine glycosylation is present at N236. 2 TSP type-1 domains span residues 260–314 (NGGW…TLCP) and 316–368 (DGRW…GLCM). N-linked (GlcNAc...) asparagine glycosylation is present at N361. A helical membrane pass occupies residues 381 to 401 (VGIVIAVTVCLAITVVVALFV). Topologically, residues 402 to 931 (YRKNHRDFES…VVSLAAEGQY (530 aa)) are cytoplasmic. Residues 402–931 (YRKNHRDFES…VVSLAAEGQY (530 aa)) form a required for netrin-mediated axon repulsion of neuronal growth cones region. A Phosphoserine modification is found at S502. The region spanning 530 to 673 (CTAFGTFNSL…LSTYALVGQS (144 aa)) is the ZU5 domain. A Phosphotyrosine modification is found at Y568. Residues 694-712 (SLEYSIRVYCLDDTQDALK) form an interaction with DCC region. The region spanning 850–929 (QKLCSSLDAP…ETVVSLAAEG (80 aa)) is the Death domain.

It belongs to the unc-5 family. As to quaternary structure, interacts with DCC (via cytoplasmic domain). Interacts (tyrosine phosphorylated form) with PTPN11. Interacts (via extracellular domain) with FLRT3 (via extracellular domain). Interacts (via Ig-like C2-type domain) with DSCAM (via extracellular domain). Interacts (via death domain) with DAPK1. Interacts (via cytoplasmic domain) with TUBB3; this interaction is decreased by NTN1/Netrin-1. Proteolytically cleaved by caspases during apoptosis. The cleavage does not take place when the receptor is associated with netrin ligand. Its cleavage by caspases is required to induce apoptosis. Post-translationally, phosphorylated on different cytoplasmic tyrosine residues. Phosphorylation of Tyr-568 leads to an interaction with PTPN11 phosphatase, suggesting that its activity is regulated by phosphorylation/dephosphorylation. Tyrosine phosphorylation is netrin-dependent. In terms of tissue distribution, detected in brain (at protein level). Mainly expressed in brain. Also expressed in kidney. Not expressed in developing or adult lung.

It is found in the cell membrane. It localises to the cell surface. Its subcellular location is the synapse. The protein localises to the synaptosome. The protein resides in the cell projection. It is found in the axon. It localises to the dendrite. Its subcellular location is the growth cone. The protein localises to the lamellipodium. The protein resides in the filopodium. In terms of biological role, receptor for netrin required for axon guidance. Mediates axon repulsion of neuronal growth cones in the developing nervous system upon ligand binding. NTN1/Netrin-1 binding might cause dissociation of UNC5C from polymerized TUBB3 in microtubules and thereby lead to increased microtubule dynamics and axon repulsion. Axon repulsion in growth cones may also be caused by its association with DCC that may trigger signaling for repulsion. Might also collaborate with DSCAM in NTN1-mediated axon repulsion independently of DCC. Also involved in corticospinal tract axon guidance independently of DCC. Involved in dorsal root ganglion axon projection towards the spinal cord. It also acts as a dependence receptor required for apoptosis induction when not associated with netrin ligand. The protein is Netrin receptor UNC5C (Unc5c) of Rattus norvegicus (Rat).